The chain runs to 148 residues: Large ribosomal subunit protein uL15 (148 aa).

Residues 1 to 30 show a composition bias toward basic residues; the sequence is MPSKLRKTRKLRGHVSHGHGRIGKHRKHPG. A disordered region spans residues 1-38; the sequence is MPSKLRKTRKLRGHVSHGHGRIGKHRKHPGGRGNAGGM.

It belongs to the universal ribosomal protein uL15 family. In terms of assembly, component of the large ribosomal subunit.

It is found in the cytoplasm. Component of the large ribosomal subunit. The ribosome is a large ribonucleoprotein complex responsible for the synthesis of proteins in the cell. The chain is Large ribosomal subunit protein uL15 (rpl27a) from Xenopus laevis (African clawed frog).